Here is a 994-residue protein sequence, read N- to C-terminus: Seizure protein 6 homolog (994 aa).

The N-terminal stretch at 1-19 (MRPVALLLLPSLLALLAHG) is a signal peptide. Residues 20–925 (LSLEAPTVGK…AASSTLDAAH (906 aa)) lie on the Extracellular side of the membrane. Positions 28-50 (GKGQAPGIEETDGELTAAPTPEQ) are disordered. O-glycosylated at two sites stretches follow at residues 38–47 (TDGELTAAPT) and 59–63 (TTAPT). Disordered stretches follow at residues 88-146 (LRPA…ESES), 171-191 (IAST…PGDM), and 241-261 (PGPC…PTDL). The span at 93-107 (PFQPDPPAPFTPSPL) shows a compositional bias: pro residues. 2 stretches are compositionally biased toward polar residues: residues 112–123 (NQDSRPVFTSPT) and 172–185 (ASTT…TPTQ). Residue N289 is glycosylated (N-linked (GlcNAc...) asparagine). Residues 355 to 414 (LSCHFPRRPAYGDVTVTSLHPGGSARFHCATGYQLKGARHLTCLNATQPFWDSKEPVCIA) enclose the Sushi 1 domain. 12 disulfide bridges follow: C357-C397, C383-C412, C416-C443, C532-C574, C559-C589, C593-C619, C710-C752, C738-C765, C771-C813, C799-C830, C838-C880, and C866-C895. 3 N-linked (GlcNAc...) asparagine glycosylation sites follow: N399, N436, and N541. The CUB 1 domain occupies 416–527 (CGGVIRNATT…AGMALRYEAF (112 aa)). A Sushi 2 domain is found at 530 to 591 (GHCYEPFVKY…WNETEPACRA (62 aa)). The 112-residue stretch at 593–704 (CSGEITDSAG…QGFVIHFFEV (112 aa)) folds into the CUB 2 domain. Sushi domains are found at residues 708 to 767 (DTCP…SCQR), 769 to 832 (TSCH…KCLL), and 836 to 897 (KPCH…ICRA). Residues 926-946 (IAAAIFLPLVAMVLLVGGVYF) traverse the membrane as a helical segment. Residues 947–994 (YFSRLQGKSSLQLPRPRPRPYNRITIESAFDNPTYETGSLSFAGDERI) are Cytoplasmic-facing.

It belongs to the SEZ6 family. Post-translationally, glycosylated.

It localises to the cell membrane. Its function is as follows. May play a role in cell-cell recognition and in neuronal membrane signaling. Seems to be important for the achievement of the necessary balance between dendrite elongation and branching during the elaboration of a complex dendritic arbor. Involved in the development of appropriate excitatory synaptic connectivity. This is Seizure protein 6 homolog (SEZ6) from Homo sapiens (Human).